A 167-amino-acid chain; its full sequence is Transcription factor 24 (167 aa).

Low complexity predominate over residues 1-23; that stretch reads MDRGRPAGSPLSASAEPAPLAAA. A disordered region spans residues 1-60; sequence MDRGRPAGSPLSASAEPAPLAAAIRDSRPGRTGPGPAGPGGGSRSGSGRPAAANAARERS. Residues 32-45 are compositionally biased toward gly residues; the sequence is TGPGPAGPGGGSRS. The span at 46-55 shows a compositional bias: low complexity; sequence GSGRPAAANA. Positions 49–101 constitute a bHLH domain; it reads RPAAANAARERSRVQTLRHAFLELQRTLPSVPPDTKLSKLDVLLLATTYIAHL.

In terms of assembly, efficient DNA binding requires dimerization with another bHLH protein.

It is found in the nucleus. In terms of biological role, putative transcription factor. This Homo sapiens (Human) protein is Transcription factor 24 (TCF24).